A 1866-amino-acid chain; its full sequence is Protein NLRC5 (1866 aa).

Residues 105 to 135 (GAEGKSQPESQLHHGLKRPHQSCGSSPRRKQ) form a disordered region. The NACHT domain occupies 222–539 (RVTVLLGKAG…PKVNKDTLTQ (318 aa)). 228–235 (GKAGMGKT) contacts ATP. LRR repeat units lie at residues 599–622 (LKKL…VDET), 713–737 (MGRL…LVKA), 741–765 (CPQL…IVEV), 769–792 (LPRL…CLAR), 869–892 (GPHL…LMAE), 897–921 (LHIA…VLRA), 930–953 (ELHI…EQKG), 976–1000 (SRRM…ALGG), 1004–1026 (LGHL…RLAQ), 1031–1058 (LGAL…CFST), 1138–1161 (LELQ…CLPQ), 1162–1184 (LPQL…FLLA), 1242–1265 (CKDL…CLLE), 1272–1294 (ISGL…LLET), 1462–1488 (CARL…LLQS), 1493–1516 (LSEL…HLAS), 1521–1544 (CHHL…ALMR), 1554–1577 (RLDL…LSQM), 1578–1600 (TCLQ…HLSE), 1605–1628 (ATSL…HLAT), 1633–1656 (LPEL…QLAE), 1661–1684 (CRRL…GLAQ), 1687–1714 (PQHL…ALDG), 1715–1739 (SPHL…CMEL), 1741–1762 (LLRQ…LLTS), and 1795–1818 (MGRL…LLAE).

The protein belongs to the NLRP family. As to quaternary structure, interacts with CHUK and IKBKB; prevents CHUK and IKBKB phosphorylation and inhibits their kinase activity. Interacts with RIGI and IFIH1; blocks the interaction of MAVS to RIGI. As to expression, expressed in spleen, thymus, lung, brain, tonsil, heart and prostate.

Its subcellular location is the cytoplasm. Functionally, probable regulator of the NF-kappa-B and type I interferon signaling pathways. May also regulate the type II interferon signaling pathway. Plays a role in homeostatic control of innate immunity and in antiviral defense mechanisms. This is Protein NLRC5 (NLRC5) from Homo sapiens (Human).